A 91-amino-acid chain; its full sequence is Small ribosomal subunit protein uS19 (91 aa).

It belongs to the universal ribosomal protein uS19 family.

Its function is as follows. Protein S19 forms a complex with S13 that binds strongly to the 16S ribosomal RNA. The polypeptide is Small ribosomal subunit protein uS19 (Colwellia psychrerythraea (strain 34H / ATCC BAA-681) (Vibrio psychroerythus)).